The sequence spans 440 residues: Phosphatidylcholine-sterol acyltransferase (440 aa).

An N-terminal signal peptide occupies residues 1 to 24; it reads MGPPGSPWQWVTLLLGLLLPPAAP. N44 carries an N-linked (GlcNAc...) (complex) asparagine glycan. The cysteines at positions 74 and 98 are disulfide-linked. A glycan (N-linked (GlcNAc...) (complex) asparagine) is linked at N108. The Nucleophile role is filled by S205. N-linked (GlcNAc...) (complex) asparagine glycosylation occurs at N296. A disulfide bridge links C337 with C380. Residues D369 and H401 each act as charge relay system in the active site. N408 carries N-linked (GlcNAc...) (complex) asparagine glycosylation. T431 carries O-linked (GalNAc...) threonine glycosylation. S433 carries O-linked (GalNAc...) serine glycosylation.

It belongs to the AB hydrolase superfamily. Lipase family. O- and N-glycosylated. O-glycosylation on Thr-431 and Ser-433 consists of sialylated galactose beta 1--&gt;3N-acetylgalactosamine structures. N-glycosylated sites contain sialylated triantennary and/or biantennary complex structures. In terms of tissue distribution, detected in blood plasma. Detected in cerebral spinal fluid (at protein level). Detected in liver. Expressed mainly in brain, liver and testes.

Its subcellular location is the secreted. The enzyme catalyses a sterol + a 1,2-diacyl-sn-glycero-3-phosphocholine = a sterol ester + a 1-acyl-sn-glycero-3-phosphocholine. It carries out the reaction a 1-O-alkyl-2-acetyl-sn-glycero-3-phosphocholine + H2O = a 1-O-alkyl-sn-glycero-3-phosphocholine + acetate + H(+). It catalyses the reaction a 1-hexadecanoyl-2-acyl-sn-glycero-3-phosphocholine + (24S)-hydroxycholesterol = (24S)-24-hydroxycholesterol ester + 1-hexadecanoyl-sn-glycero-3-phosphocholine. The catalysed reaction is (24S)-hydroxycholesterol + 1-hexadecanoyl-2-(9Z,12Z-octadecadienoyl)-sn-glycero-3-phosphocholine = (24S)-hydroxycholesterol 3-linoleoate + 1-hexadecanoyl-sn-glycero-3-phosphocholine. The enzyme catalyses 1-hexadecanoyl-2-(5Z,8Z,11Z,14Z-eicosatetraenoyl)-sn-glycero-3-phosphocholine + cholesterol = cholesteryl (5Z,8Z,11Z,14Z)-eicosatetraenoate + 1-hexadecanoyl-sn-glycero-3-phosphocholine. It carries out the reaction 1-hexadecanoyl-2-(9Z-octadecenoyl)-sn-glycero-3-phosphocholine + cholesterol = cholesteryl (9Z-octadecenoate) + 1-hexadecanoyl-sn-glycero-3-phosphocholine. It catalyses the reaction 1-hexadecanoyl-2-(8Z,11Z,14Z-eicosatrienoyl)-sn-glycero-3-phosphocholine + cholesterol = cholesteryl (8Z,11Z,14Z)-eicosatrienoate + 1-hexadecanoyl-sn-glycero-3-phosphocholine. The catalysed reaction is 1-hexadecanoyl-2-(5Z,8Z,11Z-eicosatrienoyl)-sn-glycero-3-phosphocholine + cholesterol = cholesteryl (5Z,8Z,11Z)-eicosatrienoate + 1-hexadecanoyl-sn-glycero-3-phosphocholine. The enzyme catalyses 1-hexadecanoyl-2-(5Z,8Z,11Z,14Z,17Z-eicosapentaenoyl)-sn-glycero-3-phosphocholine + cholesterol = (5Z,8Z,11Z,14Z,17Z-eicosapentaenoyl)-cholesterol + 1-hexadecanoyl-sn-glycero-3-phosphocholine. It carries out the reaction 1-hexadecanoyl-2-(9Z,12Z-octadecadienoyl)-sn-glycero-3-phosphocholine + cholesterol = cholesteryl (9Z,12Z)-octadecadienoate + 1-hexadecanoyl-sn-glycero-3-phosphocholine. It catalyses the reaction 1-hexadecanoyl-2-(6Z,9Z,12Z-octadecatrienoyl)-sn-glycero-3-phosphocholine + cholesterol = (6Z,9Z,12Z-octadecatrienoyl)-cholesterol + 1-hexadecanoyl-sn-glycero-3-phosphocholine. The catalysed reaction is 1-hexadecanoyl-2-(11Z,14Z,17Z-eicosatrienoyl)-sn-glycero-3-phosphocholine + cholesterol = (11Z,14Z,17Z-eicosatrienoyl)-cholesterol + 1-hexadecanoyl-sn-glycero-3-phosphocholine. The enzyme catalyses 1-hexadecanoyl-2-(9Z,12Z,15Z-octadecatrienoyl)-sn-glycero-3-phosphocholine + cholesterol = (9Z,12Z,15Z-octadecatrienoyl)-cholesterol + 1-hexadecanoyl-sn-glycero-3-phosphocholine. It carries out the reaction 1-hexadecanoyl-2-(9Z,12Z-octadecadienoyl)-sn-glycero-3-phosphocholine + H2O = (9Z,12Z)-octadecadienoate + 1-hexadecanoyl-sn-glycero-3-phosphocholine + H(+). It catalyses the reaction 1-hexadecanoyl-2-(5Z,8Z,11Z,14Z-eicosatetraenoyl)-sn-glycero-3-phosphocholine + H2O = 1-hexadecanoyl-sn-glycero-3-phosphocholine + (5Z,8Z,11Z,14Z)-eicosatetraenoate + H(+). The catalysed reaction is a 1-O-alkyl-2-acetyl-sn-glycero-3-phosphocholine + 1-hexadecanoyl-sn-glycero-3-phosphocholine = 1-hexadecanoyl-2-acetyl-sn-glycero-3-phosphocholine + a 1-O-alkyl-sn-glycero-3-phosphocholine. Its activity is regulated as follows. APOA1 is the most potent activator in plasma. Also activated by APOE, APOC1 and APOA4. Inhibited by haptoglobin and 5,5'-dithiobis-(2-nitrobenzoic acid) (DTNB). Central enzyme in the extracellular metabolism of plasma lipoproteins. Synthesized mainly in the liver and secreted into plasma where it converts cholesterol and phosphatidylcholines (lecithins) to cholesteryl esters and lysophosphatidylcholines on the surface of high and low density lipoproteins (HDLs and LDLs). The cholesterol ester is then transported back to the liver. Has a preference for plasma 16:0-18:2 or 18:O-18:2 phosphatidylcholines. Also produced in the brain by primary astrocytes, and esterifies free cholesterol on nascent APOE-containing lipoproteins secreted from glia and influences cerebral spinal fluid (CSF) APOE- and APOA1 levels. Together with APOE and the cholesterol transporter ABCA1, plays a key role in the maturation of glial-derived, nascent lipoproteins. Required for remodeling high-density lipoprotein particles into their spherical forms. Catalyzes the hydrolysis of 1-O-alkyl-2-acetyl-sn-glycero-3-phosphocholine (platelet-activating factor or PAF) to 1-O-alkyl-sn-glycero-3-phosphocholine (lyso-PAF). Also catalyzes the transfer of the acetate group from PAF to 1-hexadecanoyl-sn-glycero-3-phosphocholine forming lyso-PAF. Catalyzes the esterification of (24S)-hydroxycholesterol (24(S)OH-C), also known as cerebrosterol to produce 24(S)OH-C monoesters. In Homo sapiens (Human), this protein is Phosphatidylcholine-sterol acyltransferase (LCAT).